Reading from the N-terminus, the 155-residue chain is MRCPYCGHLEDRVVDSRETQDGQATRRRRACLSCERRFTTYERIEDVLPQVVKKDGRREAFDRAKIVEGVATACQKRPVSTEQVEALVSAVERQVQELGEREIRTAVIGEAVMQRLRTLDEVAYVRFASVYRAFRDVGEFMTELAGLARKDGEER.

A zinc finger lies at 3–34; the sequence is CPYCGHLEDRVVDSRETQDGQATRRRRACLSC. In terms of domain architecture, ATP-cone spans 49–139; that stretch reads PQVVKKDGRR…VYRAFRDVGE (91 aa).

This sequence belongs to the NrdR family. Zn(2+) is required as a cofactor.

Negatively regulates transcription of bacterial ribonucleotide reductase nrd genes and operons by binding to NrdR-boxes. The polypeptide is Transcriptional repressor NrdR (Anaeromyxobacter dehalogenans (strain 2CP-1 / ATCC BAA-258)).